The primary structure comprises 192 residues: Protein GrpE (192 aa).

Residues 1 to 20 (MEERNEQVVEEVKEEVKEAQ) are compositionally biased toward basic and acidic residues. The tract at residues 1–34 (MEERNEQVVEEVKEEVKEAQVEEAVTSEDSEETV) is disordered. The span at 25 to 34 (VTSEDSEETV) shows a compositional bias: acidic residues.

This sequence belongs to the GrpE family. Homodimer.

The protein localises to the cytoplasm. Functionally, participates actively in the response to hyperosmotic and heat shock by preventing the aggregation of stress-denatured proteins, in association with DnaK and GrpE. It is the nucleotide exchange factor for DnaK and may function as a thermosensor. Unfolded proteins bind initially to DnaJ; upon interaction with the DnaJ-bound protein, DnaK hydrolyzes its bound ATP, resulting in the formation of a stable complex. GrpE releases ADP from DnaK; ATP binding to DnaK triggers the release of the substrate protein, thus completing the reaction cycle. Several rounds of ATP-dependent interactions between DnaJ, DnaK and GrpE are required for fully efficient folding. This Bacillus cereus (strain AH187) protein is Protein GrpE.